A 622-amino-acid polypeptide reads, in one-letter code: Lamin Dm0 (622 aa).

A disordered region spans residues 1 to 50; sequence MSSKSRRAGTATPQPGNTSTPRPPSAGPQPPPPSTHSQTASSPLSPTRHS. At serine 2 the chain carries N-acetylserine. Residues 2–56 form a head region; that stretch reads SSKSRRAGTATPQPGNTSTPRPPSAGPQPPPPSTHSQTASSPLSPTRHSRVAEKV. Threonine 10, threonine 12, and threonine 20 each carry phosphothreonine. The segment covering 21 to 34 has biased composition (pro residues); sequence PRPPSAGPQPPPPS. Residues serine 25 and serine 34 each carry the phosphoserine modification. Position 39 is a phosphothreonine (threonine 39). Serine 41, serine 42, and serine 45 each carry phosphoserine. Position 47 is a phosphothreonine (threonine 47). Residues 54–410 enclose the IF rod domain; the sequence is EKVELQNLND…KLLVGEEARL (357 aa). The tract at residues 55–91 is coil 1A; it reads KVELQNLNDRLATYIDRVRNLETENSRLTIEVQTTRD. Residues 92-103 form a linker 1 region; that stretch reads TVTRETTNIKNI. Residues 104-241 form a coil 1B region; sequence FEAELLETRR…QIHSQEINES (138 aa). Residue serine 235 is modified to Phosphoserine. A linker 2 region spans residues 242–265; it reads RRIKQTEYSEIDGRLSSEYDAKLK. Phosphotyrosine is present on tyrosine 249. Phosphoserine occurs at positions 250 and 311. Residues 266–408 form a coil 2 region; that stretch reads QSLQELRAQY…YDKLLVGEEA (143 aa). The tail stretch occupies residues 409 to 619; that stretch reads RLNITPATNT…GDPQQSNEKC (211 aa). A phosphothreonine mark is found at threonine 413 and threonine 435. Over residues 429-440 the composition is skewed to polar residues; it reads RNSTRATPSRRT. The disordered stretch occupies residues 429–448; it reads RNSTRATPSRRTPSAAVKRK. Serine 442 carries the phosphoserine modification. Residues 446-451 carry the Nuclear localization signal motif; that stretch reads KRKRAV. A phosphoserine mark is found at serine 455 and serine 459. An LTD domain is found at 461–588; the sequence is ADYYVSASAK…RIVSQHTSSS (128 aa). Serine 595 is modified (phosphoserine). Threonine 597 carries the post-translational modification Phosphothreonine. The interval 603–622 is disordered; it reads EQLYHQQGDPQQSNEKCAIM. Residues 605–622 show a composition bias toward polar residues; that stretch reads LYHQQGDPQQSNEKCAIM. A Phosphoserine modification is found at serine 615. A Cysteine methyl ester modification is found at cysteine 619. A lipid anchor (S-farnesyl cysteine) is attached at cysteine 619. A propeptide spans 620–622 (removed in mature form); sequence AIM.

It belongs to the intermediate filament family. In terms of assembly, interacts directly with LBR. Interacts with MAN1. Interacts with Ote. Post-translationally, three forms of lamin have been identified in D.melanogaster, lamin Dm0 is rapidly processed to lamin Dm1 in the cytoplasm, Dm1 is then assembled in the nuclear envelope and is then phosphorylated, forming lamin Dm2. In terms of tissue distribution, constitutively expressed in all tissues (at protein level). Expressed in spermatocytes (at protein level).

It is found in the nucleus. The protein resides in the nucleus inner membrane. Its subcellular location is the nucleus envelope. The protein localises to the nucleus lamina. It localises to the cytoplasm. It is found in the cytoskeleton. The protein resides in the spindle pole. Its function is as follows. Lamins are components of the nuclear lamina, a fibrous layer on the nucleoplasmic side of the inner nuclear membrane, which is thought to provide a framework for the nuclear envelope and may also interact with chromatin. May have a role in the localization of the LEM domain proteins Ote, bocks and MAN1 to the nuclear membrane. In spermatocytes, plays a role in maintaining type-A lamin LamC nuclear localization; regulates meiotic cytokinesis by maintaining the structure of the spindle envelope, and by contributing to the formation of the contractile ring and central spindle. Required for nuclear migration and to link the microtubule organizing center (MTOC) to the nucleus. In addition, is required for nuclear envelope localization of klar. The protein is Lamin Dm0 of Drosophila melanogaster (Fruit fly).